Reading from the N-terminus, the 230-residue chain is Orotidine 5'-phosphate decarboxylase (230 aa).

Substrate-binding positions include Asp9, Lys31, 58 to 67, Thr120, Arg180, Gln188, Gly208, and Arg209; that span reads DLKFFDIPNT. Lys60 functions as the Proton donor in the catalytic mechanism.

Belongs to the OMP decarboxylase family. Type 1 subfamily. As to quaternary structure, homodimer.

The catalysed reaction is orotidine 5'-phosphate + H(+) = UMP + CO2. It functions in the pathway pyrimidine metabolism; UMP biosynthesis via de novo pathway; UMP from orotate: step 2/2. Functionally, catalyzes the decarboxylation of orotidine 5'-monophosphate (OMP) to uridine 5'-monophosphate (UMP). The protein is Orotidine 5'-phosphate decarboxylase of Maridesulfovibrio salexigens (strain ATCC 14822 / DSM 2638 / NCIMB 8403 / VKM B-1763) (Desulfovibrio salexigens).